Here is a 480-residue protein sequence, read N- to C-terminus: Sulfate adenylyltransferase subunit 1 (480 aa).

In terms of domain architecture, tr-type G spans 30–248 (KGLLRFLTCG…TVDVKKEASK (219 aa)). The G1 stretch occupies residues 39 to 46 (GSVDDGKS). GTP is bound at residue 39 to 46 (GSVDDGKS). The G2 stretch occupies residues 97–101 (GITID). Residues 118 to 121 (DTPG) are G3. Residues 118–122 (DTPGH) and 173–176 (NKMD) each bind GTP. The interval 173–176 (NKMD) is G4. The G5 stretch occupies residues 211-213 (SAL).

It belongs to the TRAFAC class translation factor GTPase superfamily. Classic translation factor GTPase family. CysN/NodQ subfamily. As to quaternary structure, heterodimer composed of CysD, the smaller subunit, and CysN.

It catalyses the reaction sulfate + ATP + H(+) = adenosine 5'-phosphosulfate + diphosphate. It participates in sulfur metabolism; hydrogen sulfide biosynthesis; sulfite from sulfate: step 1/3. Functionally, with CysD forms the ATP sulfurylase (ATPS) that catalyzes the adenylation of sulfate producing adenosine 5'-phosphosulfate (APS) and diphosphate, the first enzymatic step in sulfur assimilation pathway. APS synthesis involves the formation of a high-energy phosphoric-sulfuric acid anhydride bond driven by GTP hydrolysis by CysN coupled to ATP hydrolysis by CysD. This is Sulfate adenylyltransferase subunit 1 from Photorhabdus laumondii subsp. laumondii (strain DSM 15139 / CIP 105565 / TT01) (Photorhabdus luminescens subsp. laumondii).